Here is a 226-residue protein sequence, read N- to C-terminus: Gap junction beta-2 protein (226 aa).

The stretch at 2–13 is an intramembrane region; the sequence is DWGTLQTILGGV. Topologically, residues 14–20 are cytoplasmic; sequence NKHSTSI. A helical transmembrane segment spans residues 21-40; it reads GKIWLTVLFIFRIMILVVAA. Topologically, residues 41-73 are extracellular; it reads KEVWGDEQADFVCNTLQPGCKNVCYDHYFPISH. E42, G45, and E47 together coordinate Ca(2+). 3 disulfide bridges follow: C53-C180, C60-C174, and C64-C169. A helical transmembrane segment spans residues 74–94; it reads IRLWALQLIFVSTPALLVAMH. Over 95–135 the chain is Cytoplasmic; it reads VAYRRHEKKRKFIKGEIKSEFKDIEEIKTQKVRIEGSLWWT. Residues 136 to 156 form a helical membrane-spanning segment; sequence YTSSIFFRVIFEAAFMYVFYV. At 157–189 the chain is on the extracellular side; sequence MYDGFSMQRLVKCNAWPCPNTVDCFVSRPTEKT. A helical membrane pass occupies residues 190 to 210; the sequence is VFTVFMIAVSGICILLNVTEL. At 211–226 the chain is on the cytoplasmic side; the sequence is CYLLIRYCSGKSKKPV.

It belongs to the connexin family. Beta-type (group I) subfamily. In terms of assembly, a hemichannel or connexon is composed of a hexamer of connexins. A functional gap junction is formed by the apposition of two hemichannels. Forms heteromeric channels with GJB4. Interacts with CNST.

It localises to the cell membrane. The protein resides in the cell junction. It is found in the gap junction. Functionally, structural component of gap junctions. Gap junctions are dodecameric channels that connect the cytoplasm of adjoining cells. They are formed by the docking of two hexameric hemichannels, one from each cell membrane. Small molecules and ions diffuse from one cell to a neighboring cell via the central pore. In Gorilla gorilla gorilla (Western lowland gorilla), this protein is Gap junction beta-2 protein (GJB2).